The chain runs to 325 residues: Serpentine receptor class gamma-16 (325 aa).

The next 7 helical transmembrane spans lie at 25 to 45, 65 to 85, 87 to 107, 144 to 164, 187 to 207, 232 to 252, and 264 to 284; these read FCLYLIPGAILHVLILRILLI, VVSLVLIFWGIFFNRLFMFIP, LCPLVSPLFFEPSLFLKMYYW, LAVTTVFVVLALPFFGSWNLL, WASLSMFQSIFLLIALCFTII, FVSLFYSIAFLVVAVSQLIFV, and LLFQFFAFDFLTVGSAVIIML.

It belongs to the nematode receptor-like protein srg family.

Its subcellular location is the membrane. The protein is Serpentine receptor class gamma-16 (srg-16) of Caenorhabditis elegans.